We begin with the raw amino-acid sequence, 754 residues long: MSDRYELFLTCPKGLEGLLIEEAVGLGLEQAREHTSAVRGMADMETAYRLCLWSRLANRVLLVLKRFPMKDAEDLYHGVLDVDWQDHMLADGTLAVEFSGHGSGIDNTHFGALKVKDAIVDKLRTPTGERPSVDKLNPDLRIHLRLDRGEAILSLDLSGHSLHQRGYRLQQGAAPLKENLAAAILIRSGWPRIAAEGGALADPMCGVGTFLVEAAMIAADIAPNLKREQWGFTAWLGHVPALWRKLHDEALARAQAGLAKPPLWIRGYEADPRLIQPGRNNVERAGLSEWIKIYQGEVGTFEPRPDQNQKGLVICNPPYGERLGDEASLLYLYQNLGGRLRQACLNWEAAVFTGAPDLGKRMGIRSHKQYSFWNGALPCKLLLIKVLPDQFVTGERRTAEQRQVEREQAQAAADEAPVRQYNKNGNPIKPAPAPAPVVEQARLSEGGQMFANRLQKNLKQLGKWAKREGIECYRVYDADMPEYSLAIDLYQDWVHVQEYAAPKSVDPEKAQARLFDALAAIPQALNVDKSRVVIKRRERQSGTKQYERQSAQGQFTEVREGGIKLLVNLTDYLDTGLFLDHRPMRMRIQQEAAGKRFLNLFCYTATASVHAAKGGARSTTSVDLSKTYLDWARRNFSLNGFSDKNRLEQGDVMAWLDSCRDEFDLIFIDPPTFSNSKRMEGVFDVQRDQVQLLDLAMARLAPGGVLYFSNNFRKFQLDENLAARYQIEEITAKTIDPDFARNGKIHRAWKVTAR.

In terms of domain architecture, THUMP spans 46–157; that stretch reads TAYRLCLWSR…RGEAILSLDL (112 aa).

This sequence belongs to the methyltransferase superfamily. RlmKL family.

It is found in the cytoplasm. The enzyme catalyses guanosine(2445) in 23S rRNA + S-adenosyl-L-methionine = N(2)-methylguanosine(2445) in 23S rRNA + S-adenosyl-L-homocysteine + H(+). It carries out the reaction guanosine(2069) in 23S rRNA + S-adenosyl-L-methionine = N(2)-methylguanosine(2069) in 23S rRNA + S-adenosyl-L-homocysteine + H(+). Specifically methylates the guanine in position 2445 (m2G2445) and the guanine in position 2069 (m7G2069) of 23S rRNA. The protein is Ribosomal RNA large subunit methyltransferase K/L of Pseudomonas fluorescens (strain ATCC BAA-477 / NRRL B-23932 / Pf-5).